A 181-amino-acid chain; its full sequence is Capsid protein VP4 (181 aa).

It is found in the virion. In terms of biological role, VP4 self-assembles to form, together with capsid protein VP10, an icosahedral caspid of 87 nm in diameter, with a T=43 symmetry and composed of 420 hexamers and 12 pentamers. VP4 proteins arrange into hexons, while VP10 proteins form the pentameric densities located at the 5-fold axes in the virion. The stoichiometry of VP4:VP10 is 42:1. This chain is Capsid protein VP4, found in Sulfolobus (SPV1).